Consider the following 154-residue polypeptide: MGLSEAEWQLVLHVWAKVEADLSGHGQEILIRLFKGHPETLEKFDKFKHLKSEAEMKASEDLKKHGHTVLTALGGILKKKGHHEAELKPLAQSHATKHKIPIKYLEFISDAIIHVLHSKHPSDFGADAQGAMTKALELFRKDIAAKYKELGFHG.

Positions 2-148 constitute a Globin domain; sequence GLSEAEWQLV…FRKDIAAKYK (147 aa). Phosphoserine is present on Ser-4. His-65 lines the nitrite pocket. Position 65 (His-65) interacts with O2. A Phosphothreonine modification is found at Thr-68. His-94 contributes to the heme b binding site.

Belongs to the globin family. As to quaternary structure, monomeric.

It localises to the cytoplasm. Its subcellular location is the sarcoplasm. The catalysed reaction is Fe(III)-heme b-[protein] + nitric oxide + H2O = Fe(II)-heme b-[protein] + nitrite + 2 H(+). It catalyses the reaction H2O2 + AH2 = A + 2 H2O. Its function is as follows. Monomeric heme protein which primary function is to store oxygen and facilitate its diffusion within muscle tissues. Reversibly binds oxygen through a pentacoordinated heme iron and enables its timely and efficient release as needed during periods of heightened demand. Depending on the oxidative conditions of tissues and cells, and in addition to its ability to bind oxygen, it also has a nitrite reductase activity whereby it regulates the production of bioactive nitric oxide. Under stress conditions, like hypoxia and anoxia, it also protects cells against reactive oxygen species thanks to its pseudoperoxidase activity. This Mesoplodon carlhubbsi (Hubb's beaked whale) protein is Myoglobin (MB).